The sequence spans 292 residues: Ribosomal protein L11 methyltransferase (292 aa).

Residues T145, G166, D188, and N229 each contribute to the S-adenosyl-L-methionine site.

Belongs to the methyltransferase superfamily. PrmA family.

It is found in the cytoplasm. The enzyme catalyses L-lysyl-[protein] + 3 S-adenosyl-L-methionine = N(6),N(6),N(6)-trimethyl-L-lysyl-[protein] + 3 S-adenosyl-L-homocysteine + 3 H(+). Its function is as follows. Methylates ribosomal protein L11. The polypeptide is Ribosomal protein L11 methyltransferase (Nitrosococcus oceani (strain ATCC 19707 / BCRC 17464 / JCM 30415 / NCIMB 11848 / C-107)).